A 65-amino-acid chain; its full sequence is DNA-directed RNA polymerase subunit Rpo10 (65 aa).

Cys-7, Cys-10, Cys-44, and Cys-45 together coordinate Zn(2+).

This sequence belongs to the archaeal Rpo10/eukaryotic RPB10 RNA polymerase subunit family. Part of the RNA polymerase complex. The cofactor is Zn(2+).

The protein resides in the cytoplasm. It catalyses the reaction RNA(n) + a ribonucleoside 5'-triphosphate = RNA(n+1) + diphosphate. DNA-dependent RNA polymerase (RNAP) catalyzes the transcription of DNA into RNA using the four ribonucleoside triphosphates as substrates. The chain is DNA-directed RNA polymerase subunit Rpo10 from Nanoarchaeum equitans (strain Kin4-M).